A 123-amino-acid chain; its full sequence is Small ribosomal subunit protein uS13 (123 aa).

Residues 93-123 (HRKGLPVRGQNTKNNARTRKGPAKAIAGKKK) are disordered. Residues 108 to 123 (ARTRKGPAKAIAGKKK) are compositionally biased toward basic residues.

This sequence belongs to the universal ribosomal protein uS13 family. In terms of assembly, part of the 30S ribosomal subunit. Forms a loose heterodimer with protein S19. Forms two bridges to the 50S subunit in the 70S ribosome.

Its function is as follows. Located at the top of the head of the 30S subunit, it contacts several helices of the 16S rRNA. In the 70S ribosome it contacts the 23S rRNA (bridge B1a) and protein L5 of the 50S subunit (bridge B1b), connecting the 2 subunits; these bridges are implicated in subunit movement. Contacts the tRNAs in the A and P-sites. In Leuconostoc citreum (strain KM20), this protein is Small ribosomal subunit protein uS13.